We begin with the raw amino-acid sequence, 877 residues long: MVESSDTPKDTAAVPKCPPPCPEASPAEPLPNGDLEADGAQWKGTEEGGASPKSGRPEEDETESLADGETGRALENGRCTPKEGLDAPADEGELAPSDPQKKRGRRKLLEATEKSKEEKEENNFDSLKMEGSRGRLRGGLGWESSLRQRPMQRHTFQAGDPYYISKRKRDEWLARWKREAEKKAKVIAVMNVVEETPRAEPQKEEEASPPASQQPTDPASPNVATTPEPVVADAVDKNTSKSADDEPEYEDGRGLGIGELVWGKLRGFSWWPGRIVSWWMTGRSRAAEGTRWVMWFGDGKFSVVCVEKLLPLSSFSSAFHQATYNKQPMYRKAIYEVLQVASSRAGKIFPACPENDETDTSKVVEIQNKQMIEWALGGFQPSGPKGLEPPEEERNPYKEVYTEMWVEPEAAAYAPPPPAKKPRKSTTEKPKVKEIIDERTRERLVYEVRQKCRNIEDICISCGSLNVTLEHPLFIGGMCQNCKNCFLECAYQYDDDGYQSYCTICCGGREVLMCGNNNCCRCFCVECVDLLVGPGAAQAAIKEDPWNCYMCGHKGVYGLLRRREDWPSRLQMFFANNHDQEFDPPKVYPPVPAEKRKPIRVLSLFDGIATGLLVLKDLGIQVDRYIASEVCEDSITVGMVRHQGKIMYVGDVRNVTQKHIQEWGPFDLVIGGSPCNDLSIVNPARKGLYEGTGRLFFEFYRLLHEARPKEGDDRPFFWLFENVVAMGVSDKRDISRFLESNPVMIDAKEVSAAHRARYFWGNLPGMNRPLASTVNDKLELQECLEHGRIAKFSKVRTITTRSNSIKQGKDQHFPVFMNEKEDILWCTEMERVFGFPVHYTDVSNMSRLARQRLLGRSWSVPVIRHLFAPLKEYFACV.

Disordered stretches follow at residues 1–154 (MVES…MQRH), 194–250 (EETP…PEYE), and 412–431 (AYAP…EKPK). Composition is skewed to basic and acidic residues over residues 107–133 (KLLE…EGSR) and 195–206 (ETPRAEPQKEEE). Residues 210–225 (PASQQPTDPASPNVAT) show a composition bias toward polar residues. A PWWP domain is found at 226-284 (TPEPVVADAVDKNTSKSADDEPEYEDGRGLGIGELVWGKLRGFSWWPGRIVSWWMTGRS). A compositionally biased stretch (basic and acidic residues) spans 234–244 (AVDKNTSKSAD). The ADD domain occupies 447–579 (EVRQKCRNIE…LQMFFANNHD (133 aa)). Residues 458–488 (ICISCGSLNVTLEHPLFIGGMCQNCKNCFLE) form a GATA-type; atypical zinc finger. A PHD-type; atypical zinc finger spans residues 499-555 (QSYCTICCGGREVLMCGNNNCCRCFCVECVDLLVGPGAAQAAIKEDPWNCYMCGHKG). The region spanning 599–877 (IRVLSLFDGI…APLKEYFACV (279 aa)) is the SAM-dependent MTase C5-type domain. S-adenosyl-L-methionine is bound by residues 606–610 (DGIAT), E629, and 651–653 (DVR). The active site involves C675. S-adenosyl-L-methionine is bound at residue 856 to 858 (RSW).

It belongs to the class I-like SAM-binding methyltransferase superfamily. C5-methyltransferase family.

The protein localises to the nucleus. It is found in the chromosome. Its subcellular location is the cytoplasm. It carries out the reaction a 2'-deoxycytidine in DNA + S-adenosyl-L-methionine = a 5-methyl-2'-deoxycytidine in DNA + S-adenosyl-L-homocysteine + H(+). It catalyses the reaction L-cysteinyl-[protein] + S-adenosyl-L-methionine = S-methyl-L-cysteinyl-[protein] + S-adenosyl-L-homocysteine + H(+). Required for genome-wide de novo methylation and is essential for development. DNA methylation is coordinated with methylation of histones. It modifies DNA in a non-processive manner and also methylates non-CpG sites. Acts as a transcriptional corepressor for ZNF238. Can actively repress transcription through the recruitment of HDAC activity. Also has weak auto-methylation activity on some Cys residue in absence of DNA. In Gallus gallus (Chicken), this protein is DNA (cytosine-5)-methyltransferase 3A (DNMT3A).